The primary structure comprises 942 residues: Alpha,alpha-trehalose-phosphate synthase [UDP-forming] 1 (942 aa).

Residues 28-57 are disordered; the sequence is REKRKSNRARNPNDVAGSSENSENDLRLEG. Positions 92–559 are glycosyltransferase; the sequence is QRLLVVANRL…AETFVSELND (468 aa). The disordered stretch occupies residues 815–892; the sequence is DMPAIARSRP…LGNSRRPSPE (78 aa). Low complexity-rich tracts occupy residues 821 to 833 and 841 to 867; these read RSRP…AKSS and SKST…NKSS. Polar residues predominate over residues 879 to 888; it reads SNHSLGNSRR.

The protein in the N-terminal section; belongs to the glycosyltransferase 20 family. This sequence in the C-terminal section; belongs to the trehalose phosphatase family. Expressed in seedlings, leaves, roots, stems, flowers and siliques.

Its subcellular location is the vacuole. The protein resides in the secreted. The protein localises to the cell wall. It localises to the cytoplasm. It carries out the reaction D-glucose 6-phosphate + UDP-alpha-D-glucose = alpha,alpha-trehalose 6-phosphate + UDP + H(+). Functionally, required for normal embryo development, vegetative growth and transition to flowering. Regulates embryo growth, cell wall deposition, starch and sucrose degradation, but not cell differentiation. Involved in the regulation of glucose sensing and signaling genes during plant development. The chain is Alpha,alpha-trehalose-phosphate synthase [UDP-forming] 1 from Arabidopsis thaliana (Mouse-ear cress).